The following is a 236-amino-acid chain: tRNA1(Val) (adenine(37)-N6)-methyltransferase (236 aa).

Belongs to the methyltransferase superfamily. tRNA (adenine-N(6)-)-methyltransferase family.

It is found in the cytoplasm. It catalyses the reaction adenosine(37) in tRNA1(Val) + S-adenosyl-L-methionine = N(6)-methyladenosine(37) in tRNA1(Val) + S-adenosyl-L-homocysteine + H(+). Its function is as follows. Specifically methylates the adenine in position 37 of tRNA(1)(Val) (anticodon cmo5UAC). The polypeptide is tRNA1(Val) (adenine(37)-N6)-methyltransferase (Aeromonas hydrophila subsp. hydrophila (strain ATCC 7966 / DSM 30187 / BCRC 13018 / CCUG 14551 / JCM 1027 / KCTC 2358 / NCIMB 9240 / NCTC 8049)).